Reading from the N-terminus, the 148-residue chain is uncharacterized protein (148 aa).

Disordered regions lie at residues 1 to 86 and 122 to 148; these read MCPP…VQSP and RAHR…TSPC. Positions 38–57 are enriched in basic residues; it reads RPPKMQRRPRPPVAKRRRFP. The span at 134–148 shows a compositional bias: polar residues; it reads QSRQRPSPDSQTSPC.

It belongs to the Epstein-Barr virus BLLF2 family.

This is an uncharacterized protein from Homo sapiens (Human).